The chain runs to 922 residues: Cell surface glycoprotein 2 (922 aa).

An N-terminal signal peptide occupies residues M1–A23. N37, N56, N110, N220, N251, N262, and N292 each carry an N-linked (GlcNAc...) asparagine glycan. N-linked (GalNAc...) asparagine glycosylation occurs at N307. N-linked (GlcNAc...) asparagine glycans are attached at residues N319, N344, N396, N437, N490, N523, N557, N574, N587, N616, N700, N717, N809, N838, and N847. Residues P816–P899 form a disordered region. Residues Y835–V850 show a composition bias toward polar residues. The segment covering E853–P887 has biased composition (acidic residues). Residues D888–P899 show a composition bias toward low complexity. A helical transmembrane segment spans residues G898 to V918. The PGF sorting signal signature appears at P899–F901.

Belongs to the halobacterial S-layer protein family. N-glycosylated on Asn-307; this N-linked glycan is a branched trisaccharide containing 2-amino-6-sulfo-2,6-dideoxy-glucose (sulfoquinovosamine). In terms of processing, O-glycosylated on Thr residues within the DTPE repeats in the C-terminal region; glycans consist of Glc-Gal disaccharides. Post-translationally, cleaved by the archaeosortase ArtA at the C-terminus, with removal of a short hydrophobic segment. Lipidation.

It is found in the secreted. It localises to the cell wall. The protein localises to the S-layer. The protein resides in the cell membrane. Its function is as follows. S-layer protein. The S-layer is a paracrystalline mono-layered assembly of proteins which coat the surface of the cell. In H.hispanica, the S-layer contains two different glycoproteins, Slg1 and Slg2, which share highly similar amino acid sequences. The chain is Cell surface glycoprotein 2 from Haloarcula hispanica (strain ATCC 33960 / DSM 4426 / JCM 8911 / NBRC 102182 / NCIMB 2187 / VKM B-1755).